The primary structure comprises 98 residues: DNA-binding protein Fis (98 aa).

The H-T-H motif DNA-binding region spans 74–93 (QTRAATMLGINRGTLRKKLK).

It belongs to the transcriptional regulatory Fis family. Homodimer.

Functionally, activates ribosomal RNA transcription. Plays a direct role in upstream activation of rRNA promoters. This is DNA-binding protein Fis from Mannheimia haemolytica (Pasteurella haemolytica).